A 1000-amino-acid polypeptide reads, in one-letter code: Probable coatomer subunit beta' (1000 aa).

WD repeat units lie at residues 13 to 52 (ARSD…LVKS), 55 to 94 (VCDV…RVHQ), 97 to 136 (AHSD…AMKQ), 140 to 180 (GHTH…PNFT), 183 to 224 (GHEK…CVQT), 227 to 266 (GHAQ…LETT), and 351 to 391 (LGSS…NKDF). The disordered stretch occupies residues 863–1000 (PRQTETQLKA…MDDLNLDEED (138 aa)). Acidic residues predominate over residues 901 to 915 (EPEEEEEQEEFDDDQ). The segment covering 960 to 969 (SASSQQSAQD) has biased composition (low complexity). A compositionally biased stretch (acidic residues) spans 970-1000 (FQDDTQWSDEDFGDAENGDLNMDDLNLDEED).

This sequence belongs to the WD repeat COPB2 family. In terms of assembly, oligomeric complex that consists of at least the alpha, beta, beta', gamma, delta, epsilon and zeta subunits.

It localises to the cytoplasm. Its subcellular location is the golgi apparatus membrane. The protein resides in the cytoplasmic vesicle. It is found in the COPI-coated vesicle membrane. In terms of biological role, the coatomer is a cytosolic protein complex that binds to dilysine motifs and reversibly associates with Golgi non-clathrin-coated vesicles, which further mediate biosynthetic protein transport from the ER, via the Golgi up to the trans Golgi network. Coatomer complex is required for budding from Golgi membranes, and is essential for the retrograde Golgi-to-ER transport of dilysine-tagged proteins. The chain is Probable coatomer subunit beta' (copb-2) from Caenorhabditis elegans.